A 413-amino-acid polypeptide reads, in one-letter code: Putative competence-damage inducible protein (413 aa).

It belongs to the CinA family.

The sequence is that of Putative competence-damage inducible protein from Lacticaseibacillus casei (strain BL23) (Lactobacillus casei).